A 174-amino-acid polypeptide reads, in one-letter code: Eukaryotic translation elongation factor 1 epsilon-1 (174 aa).

Residue A2 is modified to N-acetylalanine. The segment at 2–56 is N-terminal; that stretch reads AAAAELSLLEKSLGLSKGNKYSAQGERQIPVLQTNNGPSLTGLTTIAAHLVKQAN. The region spanning 50–173 is the GST C-terminal domain; it reads HLVKQANKEY…FIKNRLYTNS (124 aa). A linker region spans residues 57–63; it reads KEYLLGS. The segment at 64–152 is C-terminal; it reads TAEEKAIVQQ…SRWFCHIQHY (89 aa). Position 138 is an N6-acetyllysine (K138). Residues 153 to 169 adopt a coiled-coil conformation; that stretch reads PGIRQHLSSVVFIKNRL.

In terms of assembly, part of a multisubunit complex that groups tRNA ligases for Arg (RARS1), Asp (DARS1), Gln (QARS1), Ile (IARS1), Leu (LARS1), Lys (KARS1), Met (MARS1) the bifunctional ligase for Glu and Pro (EPRS1) and the auxiliary subunits AIMP1/p43, AIMP2/p38 and EEF1E1/p18. Can interact simultaneously with MARS1 and EPRS1. Forms a linear complex that contains MARS1, EEF1E1, EPRS1 and AIMP2 that is at the core of the multisubunit complex. Interacts with ATM and ATR. The interaction with ATM, which takes place independently of TP53, is induced by DNA damage that may occur during genotoxic stress or cell growth. The interaction with ATR is enhanced by UV irradiation. Down-regulated in various cancer tissues.

The protein resides in the cytoplasm. The protein localises to the cytosol. It is found in the nucleus. Functionally, positive modulator of ATM response to DNA damage. The polypeptide is Eukaryotic translation elongation factor 1 epsilon-1 (EEF1E1) (Homo sapiens (Human)).